The following is a 352-amino-acid chain: Phosphoribosylformylglycinamidine cyclo-ligase (352 aa).

Belongs to the AIR synthase family.

It localises to the cytoplasm. It carries out the reaction 2-formamido-N(1)-(5-O-phospho-beta-D-ribosyl)acetamidine + ATP = 5-amino-1-(5-phospho-beta-D-ribosyl)imidazole + ADP + phosphate + H(+). Its pathway is purine metabolism; IMP biosynthesis via de novo pathway; 5-amino-1-(5-phospho-D-ribosyl)imidazole from N(2)-formyl-N(1)-(5-phospho-D-ribosyl)glycinamide: step 2/2. This is Phosphoribosylformylglycinamidine cyclo-ligase from Coxiella burnetii (strain RSA 331 / Henzerling II).